The primary structure comprises 230 residues: Phosphoglycolate phosphatase (230 aa).

Asp9 acts as the Nucleophile in catalysis. Mg(2+) is bound by residues Asp9, Asp11, and Asp175.

This sequence belongs to the HAD-like hydrolase superfamily. CbbY/CbbZ/Gph/YieH family. Mg(2+) serves as cofactor.

It catalyses the reaction 2-phosphoglycolate + H2O = glycolate + phosphate. It functions in the pathway organic acid metabolism; glycolate biosynthesis; glycolate from 2-phosphoglycolate: step 1/1. Specifically catalyzes the dephosphorylation of 2-phosphoglycolate. Is involved in the dissimilation of the intracellular 2-phosphoglycolate formed during the DNA repair of 3'-phosphoglycolate ends, a major class of DNA lesions induced by oxidative stress. This chain is Phosphoglycolate phosphatase, found in Psychrobacter arcticus (strain DSM 17307 / VKM B-2377 / 273-4).